Reading from the N-terminus, the 379-residue chain is Glutamate 5-kinase (379 aa).

Lys19 contacts ATP. Residues Ser59, Asp146, and Asn158 each contribute to the substrate site. Residues 178-179 (TD) and 220-226 (TGGMATK) each bind ATP. The PUA domain occupies 285–363 (SGDIVIDQGA…KDIISILGYD (79 aa)).

The protein belongs to the glutamate 5-kinase family.

The protein resides in the cytoplasm. It carries out the reaction L-glutamate + ATP = L-glutamyl 5-phosphate + ADP. It participates in amino-acid biosynthesis; L-proline biosynthesis; L-glutamate 5-semialdehyde from L-glutamate: step 1/2. Its function is as follows. Catalyzes the transfer of a phosphate group to glutamate to form L-glutamate 5-phosphate. This Vibrio vulnificus (strain YJ016) protein is Glutamate 5-kinase.